A 214-amino-acid chain; its full sequence is Large ribosomal subunit protein uL4c (214 aa).

The segment at 42–81 (VKQSNEKRQGSANTKTRSEVRGGGRKPWRQKGTGRARAGS) is disordered. Positions 64-75 (GGRKPWRQKGTG) are enriched in basic residues.

It belongs to the universal ribosomal protein uL4 family. In terms of assembly, part of the 50S ribosomal subunit.

The protein localises to the plastid. The protein resides in the chloroplast. Its function is as follows. Probably binds the 23S rRNA. In Pyropia yezoensis (Susabi-nori), this protein is Large ribosomal subunit protein uL4c (rpl4).